The sequence spans 319 residues: MASPTVKLNSGHDMPLVGFGLWKVNNETCADQVYEAIKAGYRLFDGACDYGNEVECGQGVARAIKEGIVKREELFIVSKLWNSFHEGDRVEPICRKQLADWGVDYFDLYIVHFPVALKYVDPAVRYPPGWNSESGKIEFSNATIQETWTAMESLVDKKLARSIGVSNFSAQLLMDLLRYARVRPATLQIEHHPYLTQPRLVEYAQKEGIAVTAYSSFGPLSFLELEVKNAVDTPPLFEHNTIKSLAEKYGKTPAQVLLRWATQRGIAVIPKSNNPTRLSQNLEVTGWDLEKSELEAISSLDKGLRFNDPIGYGMYVPIF.

The active-site Proton donor is the tyrosine 50. Histidine 112 serves as a coordination point for substrate. Residues 166-167 (SN), 215-224 (SSFGPLSFLE), and 271-281 (KSNNPTRLSQN) contribute to the NAD(+) site.

Belongs to the aldo/keto reductase family.

It catalyses the reaction xylitol + NAD(+) = D-xylose + NADH + H(+). It carries out the reaction xylitol + NADP(+) = D-xylose + NADPH + H(+). The protein operates within carbohydrate metabolism; D-xylose degradation. Functionally, catalyzes the initial reaction in the xylose utilization pathway by reducing D-xylose into xylitol. Xylose is a major component of hemicelluloses such as xylan. Most fungi utilize D-xylose via three enzymatic reactions, xylose reductase (XR), xylitol dehydrogenase (XDH), and xylulokinase, to form xylulose 5-phosphate, which enters pentose phosphate pathway. This chain is Probable NAD(P)H-dependent D-xylose reductase xyl1 (xyl1), found in Aspergillus oryzae (strain ATCC 42149 / RIB 40) (Yellow koji mold).